The chain runs to 104 residues: Large ribosomal subunit protein bL21 (104 aa).

Belongs to the bacterial ribosomal protein bL21 family. In terms of assembly, part of the 50S ribosomal subunit. Contacts protein L20.

Functionally, this protein binds to 23S rRNA in the presence of protein L20. This chain is Large ribosomal subunit protein bL21, found in Streptococcus pneumoniae serotype 2 (strain D39 / NCTC 7466).